Reading from the N-terminus, the 289-residue chain is Acetyl-coenzyme A carboxylase carboxyl transferase subunit beta (289 aa).

A CoA carboxyltransferase N-terminal domain is found at 34–289; that stretch reads MWVKCNKCGE…KLINMHKNSF (256 aa). Zn(2+) is bound by residues C38, C41, C57, and C60. The C4-type zinc finger occupies 38-60; sequence CNKCGEILYQNDLEKNYMACNLC.

This sequence belongs to the AccD/PCCB family. As to quaternary structure, acetyl-CoA carboxylase is a heterohexamer composed of biotin carboxyl carrier protein (AccB), biotin carboxylase (AccC) and two subunits each of ACCase subunit alpha (AccA) and ACCase subunit beta (AccD). The cofactor is Zn(2+).

The protein localises to the cytoplasm. It catalyses the reaction N(6)-carboxybiotinyl-L-lysyl-[protein] + acetyl-CoA = N(6)-biotinyl-L-lysyl-[protein] + malonyl-CoA. Its pathway is lipid metabolism; malonyl-CoA biosynthesis; malonyl-CoA from acetyl-CoA: step 1/1. Functionally, component of the acetyl coenzyme A carboxylase (ACC) complex. Biotin carboxylase (BC) catalyzes the carboxylation of biotin on its carrier protein (BCCP) and then the CO(2) group is transferred by the transcarboxylase to acetyl-CoA to form malonyl-CoA. The chain is Acetyl-coenzyme A carboxylase carboxyl transferase subunit beta from Clostridium botulinum (strain Loch Maree / Type A3).